Here is a 279-residue protein sequence, read N- to C-terminus: MPVKNLKPFNASSRGAVLVDYSELWRGSPEKKLLLPKKSCSGRNNAGRITVRHRGGRGKVRYRLISFSRFSSGAPLFTKAVVERIEYDPNRTAFIALVRDFKTGLPSYIIAPEGLKKSDVLSTDVFDDMAPGACMPLGKVPLGTTVHNVELKPGAGGQLVRSAGSSARVIARDGNYTLVTLPSGEKRLILSTCHATIGAVSNADRKNTKLGKAGRSRWLGRRPSVRGVAMNPVDHPMGGGEGKTSGGRHPVSPWGFPTKGKKTRDPNKLSSKFIKSKKR.

Residues 227-279 (GVAMNPVDHPMGGGEGKTSGGRHPVSPWGFPTKGKKTRDPNKLSSKFIKSKKR) are disordered.

It belongs to the universal ribosomal protein uL2 family. In terms of assembly, part of the 50S ribosomal subunit. Forms a bridge to the 30S subunit in the 70S ribosome.

Functionally, one of the primary rRNA binding proteins. Required for association of the 30S and 50S subunits to form the 70S ribosome, for tRNA binding and peptide bond formation. It has been suggested to have peptidyltransferase activity; this is somewhat controversial. Makes several contacts with the 16S rRNA in the 70S ribosome. This chain is Large ribosomal subunit protein uL2, found in Neorickettsia sennetsu (strain ATCC VR-367 / Miyayama) (Ehrlichia sennetsu).